The sequence spans 173 residues: Inorganic pyrophosphatase (173 aa).

The substrate site is built by K29, R43, and Y55. 3 residues coordinate Mg(2+): D65, D70, and D102. Y141 is a substrate binding site.

The protein belongs to the PPase family. As to quaternary structure, homohexamer. Mg(2+) is required as a cofactor.

Its subcellular location is the cytoplasm. The enzyme catalyses diphosphate + H2O = 2 phosphate + H(+). Its function is as follows. Catalyzes the hydrolysis of inorganic pyrophosphate (PPi) forming two phosphate ions. The polypeptide is Inorganic pyrophosphatase (Gluconobacter oxydans (strain 621H) (Gluconobacter suboxydans)).